The primary structure comprises 359 residues: Cytokine receptor-like factor 2 (359 aa).

Residues 1 to 19 form the signal peptide; it reads MAWALAVILLPRLLAAAAA. The Extracellular portion of the chain corresponds to 20 to 232; sequence AAAVTSRGDV…PAPSPALAPP (213 aa). The N-linked (GlcNAc...) asparagine glycan is linked to Asn53. A disulfide bond links Cys68 and Cys82. In terms of domain architecture, Fibronectin type-III spans 119–213; it reads PPWNVTLLWT…WTAVTRLSGA (95 aa). Asn122 carries N-linked (GlcNAc...) asparagine glycosylation. 2 disulfide bridges follow: Cys168–Cys169 and Cys181–Cys219. A WSXWS motif motif is present at residues 201-205; sequence PSEWT. Residues 233–253 traverse the membrane as a helical segment; the sequence is LLPLGCGLAALLTLSLLLAAL. Residues 254–359 lie on the Cytoplasmic side of the membrane; it reads RLRRVKDALL…MVGDSGYMTL (106 aa). The short motif at 262 to 270 is the Box 1 motif element; sequence LLPCVPDPS. Residues 312–336 are disordered; that stretch reads KRVEPEDGTSLCTVPRPPSFEPRGP.

The protein belongs to the type I cytokine receptor family. Type 5 subfamily. In terms of assembly, the TSLP receptor is a heterodimer of CRLF2 and IL7R. Binding of TSLP to CRLF2/TSLPR is a mechanistic prerequisite for recruitment of IL7R to the high-affinity ternary complex. High level of expression in liver, lung and testis. Also expressed in heart, brain, spleen, thymus and bone marrow. Highly expressed in progenitors and myeloid cells. Isoform 2 is expressed in primary hemotopoietic cells.

The protein localises to the cell membrane. It is found in the secreted. Receptor for thymic stromal lymphopoietin (TSLP). Forms a functional complex with TSLP and IL7R which is capable of stimulating cell proliferation through activation of STAT3 and STAT5. Also activates JAK2. Implicated in the development of the hematopoietic system. In Mus musculus (Mouse), this protein is Cytokine receptor-like factor 2 (Crlf2).